Consider the following 240-residue polypeptide: ATP-dependent dethiobiotin synthetase BioD (240 aa).

ATP is bound at residue 15–20 (EIGKTF). T19 is a binding site for Mg(2+). K40 is an active-site residue. Residues D57, 118-121 (EGVG), and 178-179 (NR) each bind ATP. The Mg(2+) site is built by D57 and E118.

It belongs to the dethiobiotin synthetase family. Homodimer. Mg(2+) serves as cofactor.

The protein localises to the cytoplasm. It catalyses the reaction (7R,8S)-7,8-diammoniononanoate + CO2 + ATP = (4R,5S)-dethiobiotin + ADP + phosphate + 3 H(+). The protein operates within cofactor biosynthesis; biotin biosynthesis; biotin from 7,8-diaminononanoate: step 1/2. Its function is as follows. Catalyzes a mechanistically unusual reaction, the ATP-dependent insertion of CO2 between the N7 and N8 nitrogen atoms of 7,8-diaminopelargonic acid (DAPA, also called 7,8-diammoniononanoate) to form a ureido ring. The polypeptide is ATP-dependent dethiobiotin synthetase BioD (Burkholderia mallei (strain NCTC 10247)).